The chain runs to 757 residues: Tyrosine-protein kinase HTK16 (757 aa).

Positions 10 to 102 (WYHGKITREV…GLPCKLVDFC (93 aa)) constitute an SH2 1 domain. ANK repeat units follow at residues 115 to 147 (GLDT…NVNA), 151 to 180 (SGLT…DASA), 184 to 214 (NGRT…DFLK), 219 to 248 (NGWV…SMYP), and 252 to 281 (DGDT…NQPK). Residues 287-379 (WLHQNLDRNG…GLPTLLQFPV (93 aa)) form the SH2 2 domain. 2 disordered regions span residues 381 to 407 (SAEN…PSRP) and 444 to 467 (PKLP…QKGD). The span at 455–467 (EVPNSVNVGQKGD) shows a compositional bias: polar residues. Residues 484–740 (ISFGKELGVG…PTFNELHSTF (257 aa)) enclose the Protein kinase domain. Residues 490-498 (LGVGEFGSV) and lysine 516 contribute to the ATP site. Residue aspartate 608 is the Proton acceptor of the active site. The residue at position 746 (tyrosine 746) is a Phosphotyrosine.

This sequence belongs to the protein kinase superfamily. Tyr protein kinase family. As to expression, epithelial cells.

It catalyses the reaction L-tyrosyl-[protein] + ATP = O-phospho-L-tyrosyl-[protein] + ADP + H(+). Functionally, may be involved in signal transduction. The polypeptide is Tyrosine-protein kinase HTK16 (HTK16) (Hydra vulgaris (Hydra)).